Reading from the N-terminus, the 500-residue chain is ATP synthase subunit alpha (500 aa).

Residue 168-175 (GDRQTGKT) coordinates ATP.

It belongs to the ATPase alpha/beta chains family. In terms of assembly, F-type ATPases have 2 components, CF(1) - the catalytic core - and CF(0) - the membrane proton channel. CF(1) has five subunits: alpha(3), beta(3), gamma(1), delta(1), epsilon(1). CF(0) has three main subunits: a(1), b(2) and c(9-12). The alpha and beta chains form an alternating ring which encloses part of the gamma chain. CF(1) is attached to CF(0) by a central stalk formed by the gamma and epsilon chains, while a peripheral stalk is formed by the delta and b chains.

Its subcellular location is the cell membrane. It catalyses the reaction ATP + H2O + 4 H(+)(in) = ADP + phosphate + 5 H(+)(out). Functionally, produces ATP from ADP in the presence of a proton gradient across the membrane. The alpha chain is a regulatory subunit. The chain is ATP synthase subunit alpha from Streptococcus suis (strain 98HAH33).